We begin with the raw amino-acid sequence, 469 residues long: tRNA-2-methylthio-N(6)-dimethylallyladenosine synthase (469 aa).

An MTTase N-terminal domain is found at Lys-27–Arg-142. [4Fe-4S] cluster-binding residues include Cys-36, Cys-73, Cys-105, Cys-179, Cys-183, and Cys-186. A Radical SAM core domain is found at Lys-165–Arg-398. Residues Glu-401–Leu-467 form the TRAM domain.

It belongs to the methylthiotransferase family. MiaB subfamily. As to quaternary structure, monomer. The cofactor is [4Fe-4S] cluster.

It is found in the cytoplasm. The enzyme catalyses N(6)-dimethylallyladenosine(37) in tRNA + (sulfur carrier)-SH + AH2 + 2 S-adenosyl-L-methionine = 2-methylsulfanyl-N(6)-dimethylallyladenosine(37) in tRNA + (sulfur carrier)-H + 5'-deoxyadenosine + L-methionine + A + S-adenosyl-L-homocysteine + 2 H(+). In terms of biological role, catalyzes the methylthiolation of N6-(dimethylallyl)adenosine (i(6)A), leading to the formation of 2-methylthio-N6-(dimethylallyl)adenosine (ms(2)i(6)A) at position 37 in tRNAs that read codons beginning with uridine. This chain is tRNA-2-methylthio-N(6)-dimethylallyladenosine synthase, found in Leptothrix cholodnii (strain ATCC 51168 / LMG 8142 / SP-6) (Leptothrix discophora (strain SP-6)).